The chain runs to 245 residues: CGSPAIQPQVTGYARIVNGEEAVPHSWPWQVSLQQSNGFHFCGGSLINENWVVTAAHCNVRTYHRVIVGEHDKASDENIQILKPSMVFTHPKWDSRTINNDISLIKLASPAVLGTNVSPVCLGESSDVFAPGMKCVTSGWGLTRYNAPGTPNKLQQAALPLMSNEECSQTWGNNMISDVMICAGAAGATSCMGDSGGPLVCQKDNVWTLVGIVSWGSSRCSVTTPAVYARVTELRGWVDQILAAN.

5 cysteine pairs are disulfide-bonded: C1/C121, C42/C58, C135/C201, C167/C182, and C191/C220. A propeptide spanning residues 14–15 is cleaved from the precursor; that stretch reads AR. Residues 16-243 enclose the Peptidase S1 domain; it reads IVNGEEAVPH…LRGWVDQILA (228 aa). Residues H57 and D101 each act as charge relay system in the active site. The Charge relay system role is filled by S195.

It belongs to the peptidase S1 family.

Its subcellular location is the secreted. It is found in the extracellular space. It carries out the reaction Preferential cleavage: Tyr-|-Xaa, Trp-|-Xaa, Phe-|-Xaa, Leu-|-Xaa.. This is Chymotrypsin B from Gadus morhua (Atlantic cod).